The primary structure comprises 488 residues: Argininosuccinate lyase (488 aa).

This sequence belongs to the lyase 1 family. Argininosuccinate lyase subfamily.

The protein resides in the cytoplasm. It carries out the reaction 2-(N(omega)-L-arginino)succinate = fumarate + L-arginine. It functions in the pathway amino-acid biosynthesis; L-arginine biosynthesis; L-arginine from L-ornithine and carbamoyl phosphate: step 3/3. The polypeptide is Argininosuccinate lyase (Corynebacterium jeikeium (strain K411)).